A 570-amino-acid chain; its full sequence is Nucleoprotein (570 aa).

The segment at 54-241 is binding site for the cap structure m7GTP; it reads MRKDKRNDSD…IDVSKSSINV (188 aa). Positions 342–361 are disordered; that stretch reads IDLSQNKQMSPAKPKGAGHG. Aspartate 390 and glutamate 392 together coordinate Mn(2+). Residues glutamate 400, cysteine 507, histidine 510, and cysteine 530 each contribute to the Zn(2+) site. Aspartate 534 is a binding site for Mn(2+).

Belongs to the arenaviridae nucleocapsid protein family. Homomultimerizes to form the nucleocapsid. Binds to viral genomic RNA. Interacts with glycoprotein G2. Interacts with protein Z; this interaction probably directs the encapsidated genome to budding sites. Interacts with protein L; this interaction does not interfere with Z-L interaction. Interacts with host IKBKE (via Protein kinase domain); the interaction inhibits IKBKE kinase activity.

It is found in the virion. It localises to the host cytoplasm. In terms of biological role, encapsidates the genome, protecting it from nucleases. The encapsidated genomic RNA is termed the nucleocapsid (NC). Serves as template for viral transcription and replication. The increased presence of protein N in host cell does not seem to trigger the switch from transcription to replication as observed in other negative strain RNA viruses. Through the interaction with host IKBKE, strongly inhibits the phosphorylation and nuclear translocation of host IRF3, a protein involved in interferon activation pathway, leading to the inhibition of interferon-beta and IRF3-dependent promoters activation. Also encodes a functional 3'-5' exoribonuclease that degrades preferentially dsRNA substrates and thereby participates in the suppression of interferon induction. This Praomys (African soft-furred rats) protein is Nucleoprotein.